A 156-amino-acid polypeptide reads, in one-letter code: Small ribosomal subunit protein uS7 (156 aa).

The protein belongs to the universal ribosomal protein uS7 family. Part of the 30S ribosomal subunit. Contacts proteins S9 and S11.

Functionally, one of the primary rRNA binding proteins, it binds directly to 16S rRNA where it nucleates assembly of the head domain of the 30S subunit. Is located at the subunit interface close to the decoding center, probably blocks exit of the E-site tRNA. This Erwinia tasmaniensis (strain DSM 17950 / CFBP 7177 / CIP 109463 / NCPPB 4357 / Et1/99) protein is Small ribosomal subunit protein uS7.